The following is a 622-amino-acid chain: Apical membrane antigen 1 (622 aa).

The signal sequence occupies residues Met1–Gly24. Residues Gln25 to Lys546 are Extracellular-facing. 5 disulfide bridges follow: Cys149/Cys302, Cys217/Cys247, Cys263/Cys275, Cys320/Cys418, and Cys337/Cys409. An N-linked (GlcNAc...) asparagine glycan is attached at Asn162. N-linked (GlcNAc...) asparagine glycosylation is found at Asn286, Asn371, Asn421, Asn422, and Asn499. 3 disulfide bridges follow: Cys443-Cys502, Cys490-Cys507, and Cys492-Cys509. The helical transmembrane segment at Ile547–Tyr567 threads the bilayer. Over Lys568–Tyr622 the chain is Cytoplasmic. Residues Asp577–Lys607 form a disordered region.

The protein belongs to the apicomplexan parasites AMA1 family.

Its subcellular location is the membrane. Its function is as follows. Involved in parasite invasion of erythrocytes. This Plasmodium falciparum (isolate Camp / Malaysia) protein is Apical membrane antigen 1 (AMA-1).